The following is a 308-amino-acid chain: Methionyl-tRNA formyltransferase (308 aa).

110-113 (SLLP) contacts (6S)-5,6,7,8-tetrahydrofolate.

The protein belongs to the Fmt family.

The enzyme catalyses L-methionyl-tRNA(fMet) + (6R)-10-formyltetrahydrofolate = N-formyl-L-methionyl-tRNA(fMet) + (6S)-5,6,7,8-tetrahydrofolate + H(+). Functionally, attaches a formyl group to the free amino group of methionyl-tRNA(fMet). The formyl group appears to play a dual role in the initiator identity of N-formylmethionyl-tRNA by promoting its recognition by IF2 and preventing the misappropriation of this tRNA by the elongation apparatus. This Neisseria meningitidis serogroup C (strain 053442) protein is Methionyl-tRNA formyltransferase.